Here is a 517-residue protein sequence, read N- to C-terminus: ATP synthase subunit alpha 2 (517 aa).

173 to 180 serves as a coordination point for ATP; the sequence is GDRQTGKT.

The protein belongs to the ATPase alpha/beta chains family. F-type ATPases have 2 components, CF(1) - the catalytic core - and CF(0) - the membrane proton channel. CF(1) has five subunits: alpha(3), beta(3), gamma(1), delta(1), epsilon(1). CF(0) has three main subunits: a(1), b(2) and c(9-12). The alpha and beta chains form an alternating ring which encloses part of the gamma chain. CF(1) is attached to CF(0) by a central stalk formed by the gamma and epsilon chains, while a peripheral stalk is formed by the delta and b chains.

Its subcellular location is the cell inner membrane. The enzyme catalyses ATP + H2O + 4 H(+)(in) = ADP + phosphate + 5 H(+)(out). Its function is as follows. Produces ATP from ADP in the presence of a proton gradient across the membrane. The alpha chain is a regulatory subunit. In Legionella pneumophila subsp. pneumophila (strain Philadelphia 1 / ATCC 33152 / DSM 7513), this protein is ATP synthase subunit alpha 2.